The following is a 162-amino-acid chain: tRNA-specific adenosine deaminase (162 aa).

The CMP/dCMP-type deaminase domain maps to 3–115 (DSDKYFMKCA…KNLQKYICCK (113 aa)). Position 54 (H54) interacts with Zn(2+). The active-site Proton donor is the E56. Residues C84 and C87 each coordinate Zn(2+).

The protein belongs to the cytidine and deoxycytidylate deaminase family. Homodimer. Requires Zn(2+) as cofactor.

It catalyses the reaction adenosine(34) in tRNA + H2O + H(+) = inosine(34) in tRNA + NH4(+). Functionally, catalyzes the deamination of adenosine to inosine at the wobble position 34 of tRNA(Arg2). The protein is tRNA-specific adenosine deaminase of Buchnera aphidicola subsp. Baizongia pistaciae (strain Bp).